Reading from the N-terminus, the 495-residue chain is Cytochrome P450 Tp4149 (495 aa).

A run of 2 helical transmembrane segments spans residues 4–24 (ILSL…MFFI) and 208–228 (YLSM…SWVD). Asn-419 is a glycosylation site (N-linked (GlcNAc...) asparagine). Cys-437 serves as a coordination point for heme.

Belongs to the cytochrome P450 family. Requires heme as cofactor.

The protein resides in the membrane. The protein operates within secondary metabolite biosynthesis; terpenoid biosynthesis. Its function is as follows. Probably involved in the biosynthesis of germacrene-derived sesquiterpene lactones. The chain is Cytochrome P450 Tp4149 from Tanacetum parthenium (Feverfew).